A 294-amino-acid chain; its full sequence is N-acetylmuramic acid 6-phosphate etherase (294 aa).

The region spanning 54–217 (VIKSFEEEGR…STASMIGVGK (164 aa)) is the SIS domain. Residue Glu82 is the Proton donor of the active site. Glu113 is an active-site residue.

Belongs to the GCKR-like family. MurNAc-6-P etherase subfamily. Homodimer.

The enzyme catalyses N-acetyl-D-muramate 6-phosphate + H2O = N-acetyl-D-glucosamine 6-phosphate + (R)-lactate. It participates in amino-sugar metabolism; N-acetylmuramate degradation. Its function is as follows. Specifically catalyzes the cleavage of the D-lactyl ether substituent of MurNAc 6-phosphate, producing GlcNAc 6-phosphate and D-lactate. This is N-acetylmuramic acid 6-phosphate etherase from Bacillus cereus (strain B4264).